Consider the following 334-residue polypeptide: Beta-hexosaminidase (334 aa).

Residues Asp-62, Arg-70, Arg-131, and 161–162 (KH) each bind substrate. His-174 serves as the catalytic Proton donor/acceptor. The Nucleophile role is filled by Asp-246.

This sequence belongs to the glycosyl hydrolase 3 family. NagZ subfamily.

Its subcellular location is the cytoplasm. The catalysed reaction is Hydrolysis of terminal non-reducing N-acetyl-D-hexosamine residues in N-acetyl-beta-D-hexosaminides.. The protein operates within cell wall biogenesis; peptidoglycan recycling. Functionally, plays a role in peptidoglycan recycling by cleaving the terminal beta-1,4-linked N-acetylglucosamine (GlcNAc) from peptide-linked peptidoglycan fragments, giving rise to free GlcNAc, anhydro-N-acetylmuramic acid and anhydro-N-acetylmuramic acid-linked peptides. The chain is Beta-hexosaminidase from Tolumonas auensis (strain DSM 9187 / NBRC 110442 / TA 4).